The primary structure comprises 64 residues: Translation machinery-associated protein 7 homolog (64 aa).

The tract at residues 1–64 is disordered; the sequence is MTGREGGKKK…TGGIKKSGKK (64 aa). The stretch at 21–50 forms a coiled coil; sequence EMDEEDMAFKQKQKEQQKAMEAAKQKAAKG. The segment covering 27-44 has biased composition (basic and acidic residues); it reads MAFKQKQKEQQKAMEAAK.

It belongs to the TMA7 family.

The protein is Translation machinery-associated protein 7 homolog of Aedes aegypti (Yellowfever mosquito).